The sequence spans 394 residues: General receptor for phosphoinositides 1-associated scaffold protein (394 aa).

Residues 1 to 51 form a disordered region; it reads MTLRRLRKLQQKEEATAAPDLAGRAPDSEAARAAPTPSGPPAAAAPPGAPG. Over residues 37-49 the composition is skewed to pro residues; that stretch reads PSGPPAAAAPPGA. Thr-76 is subject to Phosphothreonine. A Phosphoserine modification is found at Ser-93. The PDZ domain occupies 100 to 189; the sequence is VLTLEKGDNQ…VLRLETLYGT (90 aa). Residues 180 to 257 form an interaction with PSCD3 region; sequence VLRLETLYGT…GAGLLPGSLP (78 aa). Residue Tyr-236 is modified to Phosphotyrosine. Position 269 is an omega-N-methylarginine (Arg-269). Residues 293–318 form a disordered region; the sequence is EPQALPPPPPPARAPGPGSAETPASV. The segment covering 296–306 has biased composition (pro residues); that stretch reads ALPPPPPPARA. Residue Ser-386 is modified to Phosphoserine.

Heteromer. Composed of TAMALIN, CYTH2 and at least one GRM1. Also interacts with CYTH3, GRM2, GRM3 and GRM5. In terms of tissue distribution, expressed in brain.

Its subcellular location is the cytoplasm. The protein localises to the perinuclear region. It is found in the cell membrane. The protein resides in the postsynaptic cell membrane. Functionally, plays a role in intracellular trafficking and contributes to the macromolecular organization of group 1 metabotropic glutamate receptors (mGluRs) at synapses. In Rattus norvegicus (Rat), this protein is General receptor for phosphoinositides 1-associated scaffold protein.